Reading from the N-terminus, the 144-residue chain is Small polypeptide DEVIL 18 (144 aa).

The segment covering 30-58 has biased composition (low complexity); that stretch reads SFSTKTSSSSSKPVFTRSFSTKPTSYSSS. The interval 30 to 89 is disordered; it reads SFSTKTSSSSSKPVFTRSFSTKPTSYSSSEPIFRRSFSAKPTSSKSPFLSRSGSTKCPVD. A helical transmembrane segment spans residues 42–58; sequence PVFTRSFSTKPTSYSSS. Residues 68 to 84 show a composition bias toward polar residues; that stretch reads AKPTSSKSPFLSRSGST. The interval 108–139 is required for DVL/RTFL small polypeptide activity; the sequence is SVTRKCRNMAKEHKSRFYIMKRCVLMLVCWHK.

The protein belongs to the DVL/RTFL small polypeptides family.

It is found in the cell membrane. Its function is as follows. Small polypeptide acting as a regulatory molecule which coordinates cellular responses required for differentiation, growth and development, probably by restricting polar cell proliferation in lateral organs and coordinating socket cell recruitment and differentiation at trichome sites. The protein is Small polypeptide DEVIL 18 of Arabidopsis thaliana (Mouse-ear cress).